The primary structure comprises 40 residues: Photosystem II reaction center protein J (40 aa).

Residues 8 to 28 form a helical membrane-spanning segment; the sequence is IPLWVIGTVAGILVIGLIGIF.

Belongs to the PsbJ family. PSII is composed of 1 copy each of membrane proteins PsbA, PsbB, PsbC, PsbD, PsbE, PsbF, PsbH, PsbI, PsbJ, PsbK, PsbL, PsbM, PsbT, PsbX, PsbY, PsbZ, Psb30/Ycf12, at least 3 peripheral proteins of the oxygen-evolving complex and a large number of cofactors. It forms dimeric complexes.

It localises to the plastid. It is found in the chloroplast thylakoid membrane. Its function is as follows. One of the components of the core complex of photosystem II (PSII). PSII is a light-driven water:plastoquinone oxidoreductase that uses light energy to abstract electrons from H(2)O, generating O(2) and a proton gradient subsequently used for ATP formation. It consists of a core antenna complex that captures photons, and an electron transfer chain that converts photonic excitation into a charge separation. The chain is Photosystem II reaction center protein J from Lepidium virginicum (Virginia pepperweed).